A 235-amino-acid chain; its full sequence is Sugar fermentation stimulation protein homolog (235 aa).

The protein belongs to the SfsA family.

This is Sugar fermentation stimulation protein homolog from Serratia proteamaculans (strain 568).